Consider the following 169-residue polypeptide: MEMLQGLLLWMLLSVGGVWASRGPLRPLCRPINATLAAEKEACPICITFTTSICAGYCPSMVRVMPAALPPIPQPVCTYRELRFASIRLPGCPPGVDPMVSFPVALSCHCGPCRLKTTDCGGPRDHPLACAPQASSSSKDPPSQPLTSTSTPTPGASNRSSHPLPIKTS.

The first 20 residues, 1–20 (MEMLQGLLLWMLLSVGGVWA), serve as a signal peptide directing secretion. 6 cysteine pairs are disulfide-bonded: Cys-29–Cys-77, Cys-43–Cys-92, Cys-46–Cys-130, Cys-54–Cys-108, Cys-58–Cys-110, and Cys-113–Cys-120. The N-linked (GlcNAc...) asparagine glycan is linked to Asn-33. The segment at 131-169 (APQASSSSKDPPSQPLTSTSTPTPGASNRSSHPLPIKTS) is disordered. Residues 145 to 154 (PLTSTSTPTP) show a composition bias toward low complexity. Polar residues predominate over residues 155–169 (GASNRSSHPLPIKTS). N-linked (GlcNAc...) asparagine glycosylation is present at Asn-158.

This sequence belongs to the glycoprotein hormones subunit beta family. Heterodimer of a common alpha chain and a unique beta chain which confers biological specificity to thyrotropin, lutropin, follitropin and gonadotropin.

The protein resides in the secreted. Functionally, promotes spermatogenesis and ovulation by stimulating the testes and ovaries to synthesize steroids. In Equus quagga burchellii (Burchell's zebra), this protein is Lutropin/choriogonadotropin subunit beta (LHB).